The primary structure comprises 476 residues: Glutamyl-tRNA(Gln) amidotransferase subunit A (476 aa).

Catalysis depends on charge relay system residues Lys-70 and Ser-145. Ser-169 functions as the Acyl-ester intermediate in the catalytic mechanism.

It belongs to the amidase family. GatA subfamily. Heterotrimer of A, B and C subunits.

The catalysed reaction is L-glutamyl-tRNA(Gln) + L-glutamine + ATP + H2O = L-glutaminyl-tRNA(Gln) + L-glutamate + ADP + phosphate + H(+). In terms of biological role, allows the formation of correctly charged Gln-tRNA(Gln) through the transamidation of misacylated Glu-tRNA(Gln) in organisms which lack glutaminyl-tRNA synthetase. The reaction takes place in the presence of glutamine and ATP through an activated gamma-phospho-Glu-tRNA(Gln). In Methanosarcina acetivorans (strain ATCC 35395 / DSM 2834 / JCM 12185 / C2A), this protein is Glutamyl-tRNA(Gln) amidotransferase subunit A.